The primary structure comprises 78 residues: MGNVYTKDIKRVAMQLYEKFKDQISTDYQANKKIVDAYVDVMSKKVRNRIAGYLTRYAKMQRTQVKNEVEEEYIEGEG.

Belongs to the eukaryotic ribosomal protein eS17 family.

The sequence is that of Small ribosomal subunit protein eS17 from Sulfurisphaera tokodaii (strain DSM 16993 / JCM 10545 / NBRC 100140 / 7) (Sulfolobus tokodaii).